A 303-amino-acid chain; its full sequence is N-acetyl-D-glucosamine kinase (303 aa).

Residues 4–11 and 133–140 contribute to the ATP site; these read GFDIGGTK and GVGGGLVL. His-157, Cys-177, Cys-179, and Cys-184 together coordinate Zn(2+).

It belongs to the ROK (NagC/XylR) family. NagK subfamily.

It catalyses the reaction N-acetyl-D-glucosamine + ATP = N-acetyl-D-glucosamine 6-phosphate + ADP + H(+). The protein operates within cell wall biogenesis; peptidoglycan recycling. Catalyzes the phosphorylation of N-acetyl-D-glucosamine (GlcNAc) derived from cell-wall degradation, yielding GlcNAc-6-P. The polypeptide is N-acetyl-D-glucosamine kinase (Salmonella choleraesuis (strain SC-B67)).